A 393-amino-acid polypeptide reads, in one-letter code: 1-deoxy-D-xylulose 5-phosphate reductoisomerase (393 aa).

Residues threonine 10, glycine 11, serine 12, isoleucine 13, arginine 37, and asparagine 124 each coordinate NADPH. Lysine 125 is a binding site for 1-deoxy-D-xylulose 5-phosphate. NADPH is bound at residue glutamate 126. Aspartate 150 serves as a coordination point for Mn(2+). Positions 151, 152, 182, and 205 each coordinate 1-deoxy-D-xylulose 5-phosphate. Mn(2+) is bound at residue glutamate 152. Glycine 211 is a binding site for NADPH. Residues serine 218, asparagine 223, lysine 224, and glutamate 227 each contribute to the 1-deoxy-D-xylulose 5-phosphate site. Glutamate 227 is a Mn(2+) binding site.

It belongs to the DXR family. Requires Mg(2+) as cofactor. The cofactor is Mn(2+).

The catalysed reaction is 2-C-methyl-D-erythritol 4-phosphate + NADP(+) = 1-deoxy-D-xylulose 5-phosphate + NADPH + H(+). It participates in isoprenoid biosynthesis; isopentenyl diphosphate biosynthesis via DXP pathway; isopentenyl diphosphate from 1-deoxy-D-xylulose 5-phosphate: step 1/6. Its function is as follows. Catalyzes the NADPH-dependent rearrangement and reduction of 1-deoxy-D-xylulose-5-phosphate (DXP) to 2-C-methyl-D-erythritol 4-phosphate (MEP). The chain is 1-deoxy-D-xylulose 5-phosphate reductoisomerase from Nitrosococcus oceani (strain ATCC 19707 / BCRC 17464 / JCM 30415 / NCIMB 11848 / C-107).